Here is a 496-residue protein sequence, read N- to C-terminus: Pre-glycoprotein polyprotein GP complex (496 aa).

Gly2 is lipidated: N-myristoyl glycine; by host. Topologically, residues 2-17 (GQLISFFQEIPVFLQE) are extracellular. A helical membrane pass occupies residues 18–32 (ALNIALVAVSLIAVI). Position 33 (Lys33) is a topological domain, cytoplasmic. The helical transmembrane segment at 34 to 53 (GIINLYKSGLFQFIFFLLLA) threads the bilayer. 2 consecutive stretches face the extracellular side: residues 54-58 (GRSCS) and 59-435 (DGTF…TLVD). Position 57 (Cys57) interacts with Zn(2+). N-linked (GlcNAc...) asparagine; by host glycosylation is found at Asn83, Asn95, Asn137, Asn166, and Asn178. Disulfide bonds link Cys92–Cys237, Cys135–Cys164, Cys207–Cys213, Cys282–Cys295, Cys304–Cys313, and Cys367–Cys388. Residues Asn368, Asn376, Asn393, and Asn398 are each glycosylated (N-linked (GlcNAc...) asparagine; by host). Residues 436 to 456 (ICFWSTVFFTASLFLHLVGIP) traverse the membrane as a helical segment. Over 457–496 (THRHLKGEACPLPHKLDSFGGCRCGKYPRLRKPTIWHKRH) the chain is Cytoplasmic. 7 residues coordinate Zn(2+): His458, His460, Cys466, His470, Cys478, Cys480, and His496.

The protein belongs to the arenaviridae GPC protein family. In terms of assembly, homotetramer; disulfide-linked. Interacts with host TFRC. As to quaternary structure, homotetramer. GP2 homotetramers bind through ionic interactions with GP1 homotetramers to form the GP complex together with the stable signal peptide. The GP-C polyprotein interacts with the host protease MBTPS1/SKI-1 resulting in the polyprotein processing. Post-translationally, specific enzymatic cleavages in vivo yield mature proteins. GP-C polyprotein is cleaved in the endoplasmic reticulum by the host protease MBTPS1. Only cleaved glycoprotein is incorporated into virions. The SSP remains stably associated with the GP complex following cleavage by signal peptidase and plays crucial roles in the trafficking of GP through the secretory pathway. In terms of processing, myristoylation is necessary for GP2-mediated fusion activity.

The protein localises to the virion membrane. Its subcellular location is the host endoplasmic reticulum membrane. It localises to the host Golgi apparatus membrane. The protein resides in the host cell membrane. Functionally, class I viral fusion protein that directs fusion of viral and host endosomal membranes, leading to delivery of the nucleocapsid into the cytoplasm. Membrane fusion is mediated by irreversible conformational changes induced upon acidification in the endosome. In terms of biological role, stable signal peptide (SSP): cleaved and functions as a signal peptide. In addition, it is also retained as the third component of the GP complex. The SSP is required for efficient glycoprotein expression, post-translational maturation cleavage of GP1 and GP2, glycoprotein transport to the cell surface plasma membrane, formation of infectious virus particles, and acid pH-dependent glycoprotein-mediated cell fusion. Its function is as follows. Interacts with the host receptor. Mediates virus attachment to host TFRC. This attachment induces virion internalization predominantly through clathrin-mediated endocytosis. This is Pre-glycoprotein polyprotein GP complex from Machupo virus (MACV).